Consider the following 662-residue polypeptide: Transforming growth factor beta activator LRRC32 (662 aa).

An N-terminal signal peptide occupies residues Met1–Ala17. Topologically, residues Ala18–Asn625 are extracellular. The region spanning Gln21 to Pro48 is the LRRNT domain. LRR repeat units lie at residues Asp50–Thr73, Ala74–Ala95, His98–Gly119, Arg125–Leu145, Ser150–Asp171, Val174–Gly195, Arg198–Gln219, Leu220–Gln240, Gln244–Pro265, and Arg266–Asp286. An N-linked (GlcNAc...) asparagine glycan is attached at Asn203. Asn271 and Asn308 each carry an N-linked (GlcNAc...) asparagine glycan. LRR repeat units follow at residues Gln316–Thr339, Ser340–Ser361, Cys364–Leu385, Ser387–Asn408, Ser411–Gly432, Ser444–His465, Pro467–Gly488, Ser492–Phe513, Cys515–Val536, and Ser537–Gly558. The N-linked (GlcNAc...) asparagine glycan is linked to Asn345. An N-linked (GlcNAc...) asparagine glycan is attached at Asn545. The region spanning Asn571–Lys620 is the LRRCT domain. Residues Ile626–Ala646 form a helical membrane-spanning segment. Topologically, residues Thr647–Ala662 are cytoplasmic.

The protein belongs to the LRRC32/LRRC33 family. Interacts with TGFB1; associates via disulfide bonds with the Latency-associated peptide chain (LAP) regulatory chain of TGFB1, leading to regulate activation of TGF-beta-1. Interacts with TGFB2. Interacts with TGFB3; associates via disulfide bonds with the Latency-associated peptide chain (LAP) regulatory chain of TGFB3, leading to regulate activation of TGF-beta-3. Interacts with LAPTM4B; decreases TGFB1 production in regulatory T-cells.

The protein localises to the cell membrane. Its subcellular location is the cell surface. Key regulator of transforming growth factor beta (TGFB1, TGFB2 and TGFB3) that controls TGF-beta activation by maintaining it in a latent state during storage in extracellular space. Associates specifically via disulfide bonds with the Latency-associated peptide (LAP), which is the regulatory chain of TGF-beta, and regulates integrin-dependent activation of TGF-beta. Able to outcompete LTBP1 for binding to LAP regulatory chain of TGF-beta. Controls activation of TGF-beta-1 (TGFB1) on the surface of activated regulatory T-cells (Tregs). Required for epithelial fusion during palate development by regulating activation of TGF-beta-3 (TGFB3). This Pongo abelii (Sumatran orangutan) protein is Transforming growth factor beta activator LRRC32.